A 371-amino-acid chain; its full sequence is tRNA-specific 2-thiouridylase MnmA (371 aa).

ATP is bound by residues 14-21 (GMSGGVDS) and methionine 40. The interaction with target base in tRNA stretch occupies residues 100-102 (NPD). Cysteine 105 functions as the Nucleophile in the catalytic mechanism. An intrachain disulfide couples cysteine 105 to cysteine 205. An ATP-binding site is contributed by glycine 129. The tract at residues 155 to 157 (KDQ) is interaction with tRNA. The active-site Cysteine persulfide intermediate is the cysteine 205. Residues 321 to 322 (RY) are interaction with tRNA.

The protein belongs to the MnmA/TRMU family.

It localises to the cytoplasm. It catalyses the reaction S-sulfanyl-L-cysteinyl-[protein] + uridine(34) in tRNA + AH2 + ATP = 2-thiouridine(34) in tRNA + L-cysteinyl-[protein] + A + AMP + diphosphate + H(+). Its function is as follows. Catalyzes the 2-thiolation of uridine at the wobble position (U34) of tRNA, leading to the formation of s(2)U34. In Bordetella parapertussis (strain 12822 / ATCC BAA-587 / NCTC 13253), this protein is tRNA-specific 2-thiouridylase MnmA.